The primary structure comprises 333 residues: Ornithine carbamoyltransferase (333 aa).

Residues 56-59 (STRT), Q83, R107, and 134-137 (HPTQ) contribute to the carbamoyl phosphate site. L-ornithine is bound by residues N167, D231, and 235-236 (SM). Residues 273–274 (CL) and R318 each bind carbamoyl phosphate.

It belongs to the aspartate/ornithine carbamoyltransferase superfamily. OTCase family.

It localises to the cytoplasm. It catalyses the reaction carbamoyl phosphate + L-ornithine = L-citrulline + phosphate + H(+). It participates in amino-acid biosynthesis; L-arginine biosynthesis; L-arginine from L-ornithine and carbamoyl phosphate: step 1/3. Its function is as follows. Reversibly catalyzes the transfer of the carbamoyl group from carbamoyl phosphate (CP) to the N(epsilon) atom of ornithine (ORN) to produce L-citrulline. The chain is Ornithine carbamoyltransferase (argF) from Staphylococcus aureus (strain COL).